The chain runs to 203 residues: Glycerol-3-phosphate acyltransferase (203 aa).

A run of 5 helical transmembrane segments spans residues 6 to 26, 56 to 76, 82 to 102, 118 to 138, and 141 to 161; these read LTLA…AVLV, AAAM…YVAF, AVSL…PIFF, APIG…VVLI, and YSSL…WYFD.

It belongs to the PlsY family. In terms of assembly, probably interacts with PlsX.

Its subcellular location is the cell inner membrane. It carries out the reaction an acyl phosphate + sn-glycerol 3-phosphate = a 1-acyl-sn-glycero-3-phosphate + phosphate. It participates in lipid metabolism; phospholipid metabolism. Catalyzes the transfer of an acyl group from acyl-phosphate (acyl-PO(4)) to glycerol-3-phosphate (G3P) to form lysophosphatidic acid (LPA). This enzyme utilizes acyl-phosphate as fatty acyl donor, but not acyl-CoA or acyl-ACP. The protein is Glycerol-3-phosphate acyltransferase of Shewanella loihica (strain ATCC BAA-1088 / PV-4).